Here is an 80-residue protein sequence, read N- to C-terminus: Translation initiation factor IF-1, chloroplastic (80 aa).

In terms of domain architecture, S1-like spans 1 to 74; that stretch reads MKEQKWIHEG…TRGRIIYRLR (74 aa).

The protein belongs to the IF-1 family. As to quaternary structure, component of the 30S ribosomal translation pre-initiation complex which assembles on the 30S ribosome in the order IF-2 and IF-3, IF-1 and N-formylmethionyl-tRNA(fMet); mRNA recruitment can occur at any time during PIC assembly.

It is found in the plastid. The protein resides in the chloroplast. In terms of biological role, one of the essential components for the initiation of protein synthesis. Stabilizes the binding of IF-2 and IF-3 on the 30S subunit to which N-formylmethionyl-tRNA(fMet) subsequently binds. Helps modulate mRNA selection, yielding the 30S pre-initiation complex (PIC). Upon addition of the 50S ribosomal subunit IF-1, IF-2 and IF-3 are released leaving the mature 70S translation initiation complex. In Illicium oligandrum (Star anise), this protein is Translation initiation factor IF-1, chloroplastic.